The chain runs to 345 residues: Ubiquinone biosynthesis O-methyltransferase, mitochondrial (345 aa).

A mitochondrion-targeting transit peptide spans 1–86 (MWRGGRLSSR…TYRSSWKKLY (86 aa)). Residue arginine 124 coordinates S-adenosyl-L-methionine. An N6-acetyllysine mark is found at lysine 143 and lysine 149. S-adenosyl-L-methionine-binding residues include glycine 154 and aspartate 175. Residue lysine 196 is modified to N6-acetyllysine. Serine 222 contributes to the S-adenosyl-L-methionine binding site. The Mg(2+) site is built by glutamate 223, glutamate 226, and histidine 227.

The protein belongs to the class I-like SAM-binding methyltransferase superfamily. UbiG/COQ3 family. In terms of assembly, component of a multi-subunit COQ enzyme complex, composed of at least COQ3, COQ4, COQ5, COQ6, COQ7 and COQ9. Mg(2+) serves as cofactor.

It localises to the mitochondrion inner membrane. The catalysed reaction is 3,4-dihydroxy-5-(all-trans-decaprenyl)benzoate + S-adenosyl-L-methionine = 4-hydroxy-3-methoxy-5-(all-trans-decaprenyl)benzoate + S-adenosyl-L-homocysteine + H(+). It catalyses the reaction a 3-demethylubiquinone + S-adenosyl-L-methionine = a ubiquinone + S-adenosyl-L-homocysteine. It carries out the reaction 3-demethylubiquinol-10 + S-adenosyl-L-methionine = ubiquinol-10 + S-adenosyl-L-homocysteine + H(+). The protein operates within cofactor biosynthesis; ubiquinone biosynthesis. O-methyltransferase required for two non-consecutive steps during ubiquinone biosynthesis. Catalyzes the 2 O-methylation of 3,4-dihydroxy-5-(all-trans-decaprenyl)benzoic acid into 4-hydroxy-3-methoxy-5-(all-trans-decaprenyl)benzoic acid. Also catalyzes the last step of ubiquinone biosynthesis by mediating methylation of 3-demethylubiquinone into ubiquinone. Also able to mediate the methylation of 3-demethylubiquinol-10 into ubiquinol-10. This chain is Ubiquinone biosynthesis O-methyltransferase, mitochondrial, found in Rattus norvegicus (Rat).